The chain runs to 1178 residues: Phosphate system positive regulatory protein PHO81 (1178 aa).

Residues 1 to 169 (MKFGKYLEAR…QSHDKDFYLA (169 aa)) form the SPX domain. The tract at residues 210–250 (QSSTFTNDDDDDNNTSNNNKHNNNNNNNNNNNNNNNNNNIL) is disordered. A compositionally biased stretch (low complexity) spans 223-250 (NTSNNNKHNNNNNNNNNNNNNNNNNNIL). ANK repeat units follow at residues 423 to 452 (HSRV…LEDV), 458 to 487 (DSKT…ANAS), 506 to 535 (VQFD…KQNA), 556 to 586 (TGLC…DPNE), 591 to 620 (NKWT…RLDI), and 624 to 653 (NGHS…NLPS). A GP-PDE domain is found at 871-1178 (IINYEPYWKS…ELLFENNIDM (308 aa)). Phosphoserine is present on Ser-956.

Associates specifically with the PHO80-PHO85 and PCL7-PHO85 cyclin-CDK complexes, and much of this interaction is mediated through the PHO80 and PCL7 cyclin subunits. Interacts with the transcription factor PHO4. Phosphorylated by the cyclin-CDK PHO80-PHO85. Phosphorylation mediates the formation of a stable interaction with the cyclin-CDK and is required for function as an active inhibitor of the complex under phosphate starvation conditions.

Its subcellular location is the cytoplasm. The protein resides in the nucleus. Functionally, inhibits the kinase activity of the cyclin-CDKs PHO80-PHO85 and PCL7-PHO85 under low-phosphate conditions. This Saccharomyces cerevisiae (strain ATCC 204508 / S288c) (Baker's yeast) protein is Phosphate system positive regulatory protein PHO81 (PHO81).